Consider the following 308-residue polypeptide: 4-hydroxyproline 2-epimerase (308 aa).

Residue C88 is the Proton acceptor of the active site. Substrate contacts are provided by residues 89-90 (GH), H208, and D232. The active-site Proton donor is C236. 237–238 (GT) lines the substrate pocket.

It belongs to the proline racemase family.

The enzyme catalyses trans-4-hydroxy-L-proline = cis-4-hydroxy-D-proline. Its function is as follows. Catalyzes the epimerization of trans-4-hydroxy-L-proline (t4LHyp) to cis-4-hydroxy-D-proline (c4DHyp). Is likely involved in a degradation pathway that converts t4LHyp to alpha-ketoglutarate. Can also catalyze the epimerization of trans-3-hydroxy-L-proline (t3LHyp) to cis-3-hydroxy-D-proline (c3DHyp), albeit with 19-fold lower efficiency. Displays no proline racemase activity. This chain is 4-hydroxyproline 2-epimerase, found in Chromobacterium violaceum (strain ATCC 12472 / DSM 30191 / JCM 1249 / CCUG 213 / NBRC 12614 / NCIMB 9131 / NCTC 9757 / MK).